The chain runs to 1036 residues: MAASTTTPTATTRPFFTMNPTTTEHDFRFPRRPGDSMAGTGLGGAAMSSSSANNNHNQHHPMSAFNHHHHHNAAGSARGRDSDGRPSSSNNNTSNGFVANINHQSSSNNNISKNIPPPTSDYHTQSASNGAAAYDLLRSSAFPPFQDGLAGMTQSPDEMQKQDPLATQVWKYFAKTKLALPNQERMENLTWRMMAKPLQTYRRQMETDRTHRFSESAPQKSTSGIARLRKSSEQTQSQGSDLMNLDDFINGENISTPAGLSLAPSPETSSKMADDRTAHHSTASAIPIKARKDQQSQHMIPQSVPAALHHPRMQTEFGYLPRHLRKTSIDETSKRNPNRKRPADFSPHVSAVTPSYVTNGLDADTDLHDYSLDHTSHDGLPPQTAPSSVPYALDTVGLDADTFITSAGPFQQNFSFSPSTSPMVSHDPFTAMFGPNNSSMHSGPINGNNFYSPPASAFQSTASTPHPMNEGGDNFYFGVDMRRARQQPYQPGNHGMGNAMAHQFPYAGNGNMMFPASSAGQDPTPSFAAPNSFSGHIDPTQVFHNEQAVRSPGMSVLQDSLFTFGAESDGDEEDGGAFADRNLSISHDFSSQGMEEPAFDSPSMGWDPSLPGNFSTQAARYPGGPPRKQVTIGATTTDYVDNTGEWDGSGLPRSQSQSFRQSDLRKGKMSRTASTPGLSARMNPFERLAQSASHSPPADVGRSSGLSSVPASRPSSPPPGAKQGSTTNLQGAAGNSTDTPTTCTNCFTQTTPLWRRNPDGQPLCNACGLFLKLHGVVRPLSLKTDVIKKRNRGSGASLPVGGTSTRSKKNASMSAAARKNSTLSITSNANNQPPAQVATPPAQQQVRASSVNESESPASGPASGGNTAGSTPTSYHGSTGSTSGAVGGKSVIPIASAPPKSAPGPGAGSMSRRDTISSKRQRRHSKSAGSDQPVSAGAVSSSGMDVDSPANSTGSNETMPTFNPGGAFSGLPPTTQSSLGFGNGYINTPRPMVGPGGMMGMPNGQAGQMMGASSSSGPGSGPSRTGAEWEWLTMSL.

Residues 1-17 (MAASTTTPTATTRPFFT) are compositionally biased toward low complexity. Disordered regions lie at residues 1-126 (MAAS…HTQS), 207-240 (TDRT…SQGS), 256-298 (TPAG…QSQH), 318-351 (GYLP…HVSA), 590-743 (SSQG…PTTC), 792-976 (RGSG…PTTQ), and 1000-1028 (GMPN…TGAE). Positions 23–34 (TEHDFRFPRRPG) are enriched in basic and acidic residues. The span at 45–56 (AAMSSSSANNNH) shows a compositional bias: low complexity. 3 consecutive repeat copies span residues 49–55 (SSSANNN), 87–92 (SSSNNN), and 105–110 (SSSNNN). The interval 49 to 110 (SSSANNNHNQ…INHQSSSNNN (62 aa)) is 3 X approximate repeats. Positions 100–114 (NINHQSSSNNNISKN) are enriched in low complexity. Positions 652–661 (PRSQSQSFRQ) are enriched in polar residues. Low complexity predominate over residues 703–714 (SSGLSSVPASRP). Over residues 723 to 736 (QGSTTNLQGAAGNS) the composition is skewed to polar residues. The GATA-type zinc finger occupies 743–767 (CTNCFTQTTPLWRRNPDGQPLCNAC). The segment covering 802-827 (GTSTRSKKNASMSAAARKNSTLSITS) has biased composition (polar residues). 2 stretches are compositionally biased toward low complexity: residues 828–861 (NANN…ASGP) and 868–899 (AGST…SAPP). Over residues 927–961 (SAGSDQPVSAGAVSSSGMDVDSPANSTGSNETMPT) the composition is skewed to polar residues. Low complexity predominate over residues 1000-1023 (GMPNGQAGQMMGASSSSGPGSGPS).

Interacts with nmr.

It localises to the nucleus. Its function is as follows. Major nitrogen regulatory protein. During conditions of nitrogen limitation it turns on the expression of genes for enzymes which are required for the use of a variety of secondary nitrogen sources, including nitrates, purines, amino acids, and proteins. The chain is Nitrogen catabolic enzyme regulatory protein (nit-2) from Neurospora crassa (strain ATCC 24698 / 74-OR23-1A / CBS 708.71 / DSM 1257 / FGSC 987).